Here is a 351-residue protein sequence, read N- to C-terminus: Methylthioribose-1-phosphate isomerase (351 aa).

Aspartate 244 acts as the Proton donor in catalysis.

Belongs to the eIF-2B alpha/beta/delta subunits family. MtnA subfamily.

It is found in the cytoplasm. It localises to the nucleus. The catalysed reaction is 5-(methylsulfanyl)-alpha-D-ribose 1-phosphate = 5-(methylsulfanyl)-D-ribulose 1-phosphate. Its pathway is amino-acid biosynthesis; L-methionine biosynthesis via salvage pathway; L-methionine from S-methyl-5-thio-alpha-D-ribose 1-phosphate: step 1/6. Its function is as follows. Catalyzes the interconversion of methylthioribose-1-phosphate (MTR-1-P) into methylthioribulose-1-phosphate (MTRu-1-P). The protein is Methylthioribose-1-phosphate isomerase of Anopheles gambiae (African malaria mosquito).